A 165-amino-acid polypeptide reads, in one-letter code: Xanthine-guanine phosphoribosyltransferase (165 aa).

Residues 41–42 (RG) and 98–106 (DDLTDTGKT) contribute to the 5-phospho-alpha-D-ribose 1-diphosphate site. A Mg(2+)-binding site is contributed by Asp-99. Positions 102 and 145 each coordinate guanine. The xanthine site is built by Asp-102 and Ile-145. Residues 102 to 106 (DTGKT) and 144 to 145 (WI) contribute to the GMP site.

It belongs to the purine/pyrimidine phosphoribosyltransferase family. XGPT subfamily. As to quaternary structure, homotetramer. It depends on Mg(2+) as a cofactor.

It is found in the cell inner membrane. The enzyme catalyses GMP + diphosphate = guanine + 5-phospho-alpha-D-ribose 1-diphosphate. The catalysed reaction is XMP + diphosphate = xanthine + 5-phospho-alpha-D-ribose 1-diphosphate. It catalyses the reaction IMP + diphosphate = hypoxanthine + 5-phospho-alpha-D-ribose 1-diphosphate. It participates in purine metabolism; GMP biosynthesis via salvage pathway; GMP from guanine: step 1/1. Its pathway is purine metabolism; XMP biosynthesis via salvage pathway; XMP from xanthine: step 1/1. Its function is as follows. Purine salvage pathway enzyme that catalyzes the transfer of the ribosyl-5-phosphate group from 5-phospho-alpha-D-ribose 1-diphosphate (PRPP) to the N9 position of the 6-oxopurines guanine and xanthine to form the corresponding ribonucleotides GMP (guanosine 5'-monophosphate) and XMP (xanthosine 5'-monophosphate), with the release of PPi. To a lesser extent, also acts on hypoxanthine. The sequence is that of Xanthine-guanine phosphoribosyltransferase from Chelativorans sp. (strain BNC1).